The following is a 1315-amino-acid chain: Serine/threonine-protein kinase 36 (1315 aa).

One can recognise a Protein kinase domain in the interval 4-254 (YHVLEMIGEG…WPDLLYHPFI (251 aa)). ATP is bound by residues 10–18 (IGEGSFGRV) and lysine 33. Aspartate 125 functions as the Proton acceptor in the catalytic mechanism. 2 disordered regions span residues 312 to 345 (EAMQ…PRLG) and 365 to 405 (SWAE…RSTD). The segment covering 379–397 (RENRTTPDCERAFPEERPE) has biased composition (basic and acidic residues).

Belongs to the protein kinase superfamily. Ser/Thr protein kinase family. As to quaternary structure, interacts with SPAG16 and KIF27. Mg(2+) serves as cofactor.

The protein resides in the cytoplasm. The protein localises to the nucleus. It localises to the cytoskeleton. Its subcellular location is the cilium axoneme. It catalyses the reaction L-seryl-[protein] + ATP = O-phospho-L-seryl-[protein] + ADP + H(+). The catalysed reaction is L-threonyl-[protein] + ATP = O-phospho-L-threonyl-[protein] + ADP + H(+). Serine/threonine protein kinase which plays an important role in the sonic hedgehog (Shh) pathway by regulating the activity of GLI transcription factors. Controls the activity of the transcriptional regulators GLI1, GLI2 and GLI3 by opposing the effect of SUFU and promoting their nuclear localization. GLI2 requires an additional function of STK36 to become transcriptionally active, but the enzyme does not need to possess an active kinase catalytic site for this to occur. Required for postnatal development, possibly by regulating the homeostasis of cerebral spinal fluid or ciliary function. Essential for construction of the central pair apparatus of motile cilia. The polypeptide is Serine/threonine-protein kinase 36 (Pongo abelii (Sumatran orangutan)).